The following is a 293-amino-acid chain: Bifunctional protein FolD (293 aa).

Residues 165 to 167 (GRS), Ser190, and Ile231 each bind NADP(+).

The protein belongs to the tetrahydrofolate dehydrogenase/cyclohydrolase family. Homodimer.

The enzyme catalyses (6R)-5,10-methylene-5,6,7,8-tetrahydrofolate + NADP(+) = (6R)-5,10-methenyltetrahydrofolate + NADPH. The catalysed reaction is (6R)-5,10-methenyltetrahydrofolate + H2O = (6R)-10-formyltetrahydrofolate + H(+). Its pathway is one-carbon metabolism; tetrahydrofolate interconversion. Functionally, catalyzes the oxidation of 5,10-methylenetetrahydrofolate to 5,10-methenyltetrahydrofolate and then the hydrolysis of 5,10-methenyltetrahydrofolate to 10-formyltetrahydrofolate. In Synechococcus sp. (strain CC9311), this protein is Bifunctional protein FolD.